Reading from the N-terminus, the 127-residue chain is MSLLKEFKEFAMRGNVIDLAVAVVMGVAFNKIVTALVDGIIMPCVGLLLGGINIAGLSFTVGDAQIKWGSFLQNVIDFIIVAFAIFVLIKLINLLQRKKENEPEPVTPEIQLLTEIRDLLARNSSKI.

3 consecutive transmembrane segments (helical) span residues 9-29 (EFAM…GVAF), 32-52 (IVTA…LGGI), and 75-95 (VIDF…INLL).

It belongs to the MscL family. As to quaternary structure, homopentamer.

The protein localises to the cell inner membrane. In terms of biological role, channel that opens in response to stretch forces in the membrane lipid bilayer. May participate in the regulation of osmotic pressure changes within the cell. The sequence is that of Large-conductance mechanosensitive channel from Legionella pneumophila (strain Paris).